The sequence spans 437 residues: Xylose isomerase (437 aa).

Active-site residues include His101 and Asp104. Glu232, Glu268, His271, Asp296, Asp307, Asp309, and Asp339 together coordinate Mg(2+).

The protein belongs to the xylose isomerase family. Homotetramer. The cofactor is Mg(2+).

The protein localises to the cytoplasm. It carries out the reaction alpha-D-xylose = alpha-D-xylulofuranose. The sequence is that of Xylose isomerase from Actinobacillus succinogenes (strain ATCC 55618 / DSM 22257 / CCUG 43843 / 130Z).